The following is a 361-amino-acid chain: Velvet complex subunit B (361 aa).

2 disordered regions span residues 1 to 36 (MYAV…SLRQ) and 308 to 340 (NGAP…VLLR). Residues 23-35 (PSVQYPSGTTSLR) show a composition bias toward polar residues. The Velvet domain occupies 47-353 (QDGRSWSLQV…SASALRYRVS (307 aa)). Low complexity predominate over residues 323 to 336 (SLNPSRSSPPKSSP).

Belongs to the velvet family. VelB subfamily. As to quaternary structure, component of the heterotrimeric velvet complex composed of laeA, veA and velB; VeA acting as a bridging protein between laeA and velB. Interacts with velA. Forms a heterodimeric complex with vosA; the formation of the velB-vosA complex is light-dependent. Interacts with vosA.

It is found in the nucleus. Its subcellular location is the cytoplasm. Functionally, component of the velvet transcription factor complex that controls sexual/asexual developmental ratio in response to light, promoting sexual development in the darkness while stimulating asexual sporulation under illumination. The velvet complex acts as a global regulator for secondary metabolite gene expression. Component of the velB-VosA heterodimeric complex that plays a dual role in activating genes associated with spore maturation and repressing certain development-associated genes. The velB-VosA complex binds DNA through the DNA-binding domain of vosA that recognizes an 11-nucleotide consensus sequence 5'-CTGGCCGCGGC-3' consisting of two motifs in the promoters of key developmental regulatory genes. Controls conidiophore formation. The protein is Velvet complex subunit B of Penicillium rubens (strain ATCC 28089 / DSM 1075 / NRRL 1951 / Wisconsin 54-1255) (Penicillium chrysogenum).